A 281-amino-acid chain; its full sequence is Probable catechol O-methyltransferase 2 (281 aa).

7 residues coordinate S-adenosyl-L-methionine: isoleucine 78, glutamate 100, serine 108, glutamate 127, valine 128, alanine 156, and aspartate 183. Aspartate 183 serves as a coordination point for Mg(2+). Lysine 186 is a binding site for substrate. Mg(2+)-binding residues include aspartate 211 and asparagine 212. Asparagine 212 contacts substrate.

The protein belongs to the class I-like SAM-binding methyltransferase superfamily. Cation-dependent O-methyltransferase family. It depends on Mg(2+) as a cofactor.

It is found in the vacuole. It catalyses the reaction a catechol + S-adenosyl-L-methionine = a guaiacol + S-adenosyl-L-homocysteine + H(+). The sequence is that of Probable catechol O-methyltransferase 2 from Schizosaccharomyces pombe (strain 972 / ATCC 24843) (Fission yeast).